A 303-amino-acid chain; its full sequence is Taste receptor type 2 member 13 (303 aa).

Residues 1-7 (MESALPS) are Extracellular-facing. The chain crosses the membrane as a helical span at residues 8–28 (ILTLVIIAEFIIGNLSNGFIV). Over 29–55 (LINYIDWVSKRELSSVDKLLIILAISR) the chain is Cytoplasmic. Residues 56–76 (IGLIWEILVSWFLALHYLAIF) traverse the membrane as a helical segment. Residues 77-85 (VSGTGLRIM) are Extracellular-facing. The helical transmembrane segment at 86 to 106 (IFSWIVSNHFSLWLATILSIF) threads the bilayer. Residues 107 to 128 (YLLKIASFSSPAFLYLKWRVNK) lie on the Cytoplasmic side of the membrane. A helical membrane pass occupies residues 129–149 (VILMILLGSLVFLFLNLIQIN). The Extracellular segment spans residues 150–184 (IHIKDWLDRYEGNTTWNFSMSDFVTFSVSVKFTMT). Residues N162 and N166 are each glycosylated (N-linked (GlcNAc...) asparagine). A helical transmembrane segment spans residues 185 to 205 (MFSLTPFTVALISFSLLIFSL). Topologically, residues 206 to 232 (QKHLQKMQLNYKGHREPRTKVHTNALK) are cytoplasmic. A helical membrane pass occupies residues 233 to 253 (IVISFLLLYASFFLCILISWI). Residues 254-261 (SELYQNTA) are Extracellular-facing. Residues 262–282 (IYMLCETIGLFYPSSHSFLLI) form a helical membrane-spanning segment. The Cytoplasmic segment spans residues 283–303 (LGNPKLRQAFLLVAAKVWAKR).

Belongs to the G-protein coupled receptor T2R family.

The protein resides in the membrane. Receptor that may play a role in the perception of bitterness and is gustducin-linked. May play a role in sensing the chemical composition of the gastrointestinal content. The activity of this receptor may stimulate alpha gustducin, mediate PLC-beta-2 activation and lead to the gating of TRPM5. The chain is Taste receptor type 2 member 13 (TAS2R13) from Pongo pygmaeus (Bornean orangutan).